Reading from the N-terminus, the 382-residue chain is Glutamyl-tRNA reductase (382 aa).

Substrate contacts are provided by residues 38-41, S85, 90-92, and Q96; these read TCNR and ENQ. C39 serves as the catalytic Nucleophile. 164 to 169 contacts NADP(+); it reads GAGEMG.

Belongs to the glutamyl-tRNA reductase family. As to quaternary structure, homodimer.

It catalyses the reaction (S)-4-amino-5-oxopentanoate + tRNA(Glu) + NADP(+) = L-glutamyl-tRNA(Glu) + NADPH + H(+). It participates in porphyrin-containing compound metabolism; protoporphyrin-IX biosynthesis; 5-aminolevulinate from L-glutamyl-tRNA(Glu): step 1/2. Its function is as follows. Catalyzes the NADPH-dependent reduction of glutamyl-tRNA(Glu) to glutamate 1-semialdehyde (GSA). The chain is Glutamyl-tRNA reductase from Methanococcus maripaludis (strain C6 / ATCC BAA-1332).